The primary structure comprises 70 residues: Large ribosomal subunit protein bL31c (70 aa).

The protein belongs to the bacterial ribosomal protein bL31 family. Type A subfamily. In terms of assembly, part of the 50S ribosomal subunit.

It localises to the plastid. The protein resides in the chloroplast. Functionally, binds the 23S rRNA. The chain is Large ribosomal subunit protein bL31c from Porphyra purpurea (Red seaweed).